A 108-amino-acid polypeptide reads, in one-letter code: Large ribosomal subunit protein eL32 (108 aa).

A compositionally biased stretch (basic residues) spans arginine 21 to methionine 30. The tract at residues arginine 21–glycine 44 is disordered.

This sequence belongs to the eukaryotic ribosomal protein eL32 family.

This chain is Large ribosomal subunit protein eL32 (rpl32e), found in Methanothermobacter thermautotrophicus (strain ATCC 29096 / DSM 1053 / JCM 10044 / NBRC 100330 / Delta H) (Methanobacterium thermoautotrophicum).